Consider the following 3685-residue polypeptide: Dystrophin (3685 aa).

Residues 1–240 (MLWWEEVEDC…YITSLFQVLP (240 aa)) form an actin-binding region. Calponin-homology (CH) domains lie at 15–119 (DVQK…LHWQ) and 134–240 (TNSE…QVLP). Positions 63-72 (PKEKGSTRVH) are ANK2- and ANK-3 binding. Spectrin repeat units lie at residues 339–447 (VNLD…NLHR), 448–556 (VLMD…LLQD), 559–667 (LKWQ…QISQ), 719–828 (EIRK…WLEY), 830–934 (NNII…ELQT), 943–1045 (RYQE…KLEE), 1048–1154 (NKLR…ALKG), 1157–1263 (EKTV…TLEE), 1266–1367 (ACWH…LLEQ), 1368–1463 (SIQS…LFQK), 1468–1568 (EQRL…QLEK), 1571–1676 (KLSR…LLLE), 1679–1778 (KHME…KASI), 1779–1874 (PLKE…KALE), 1877–1979 (HQWY…TVRE), 1992–2101 (EISY…RFDR), 2104–2208 (EKWR…RLEE), 2211–2318 (NILS…EIEA), 2319–2423 (QIKD…LRAK), 2475–2577 (FNRA…QLNE), 2580–2686 (KDST…ALEE), 2689–2802 (RLLQ…HLEA), 2808–2930 (KRLH…RKID), and 2935–3040 (RLRE…QLHE). At N340 the chain carries Phosphothreonine. Phosphoserine occurs at positions 344 and 348. Phosphothreonine is present on residues E519, S616, and S629. Residues 1415-1913 (SDLTSHEISL…PEPRDERKIK (499 aa)) form an interaction with SYNM region. In terms of domain architecture, WW spans 3055-3088 (TSVQGPWERAISPNKVPYYINHETQTTCWDHPKM). The interval 3058-3408 (QGPWERAISP…TVLEGDNMET (351 aa)) is interaction with SYNM. The ZZ-type; degenerate zinc-finger motif lies at 3308–3364 (KHQAKCNICKECPIIGFRYRSLKHFNYDICQSCFFSGRVAKGHKMHYPMVEYCTPTT). Zn(2+) is bound by residues C3313, C3316, C3337, and C3340. A binds to SNTB1 region spans residues 3466-3518 (DDEHLLIQHYCQSLNQDSPLSQPRSPAQILISLESEERGELERILADLEEENR). Phosphoserine is present on residues S3483, S3490, and S3500. Disordered regions lie at residues 3528-3554 (KQQH…QSPR) and 3603-3685 (EAKV…EDTM). Composition is skewed to polar residues over residues 3607–3626 (NGTT…SSQP) and 3662–3673 (QLNNSFPSSRGR). Phosphoserine occurs at positions 3612, 3613, 3617, 3623, 3624, and 3666.

Interacts with SYNM. Interacts with the syntrophins SNTA1, SNTB1, SNTB2, SNTG1 and SNTG2. Interacts with KRT19. Component of the dystrophin-associated glycoprotein complex which is composed of three subcomplexes: a cytoplasmic complex comprised of DMD (or UTRN), DTNA and a number of syntrophins, such as SNTB1, SNTB2, SNTG1 and SNTG2, the transmembrane dystroglycan complex, and the sarcoglycan-sarcospan complex. Interacts with DAG1 (betaDAG1) with DMD; the interaction is inhibited by phosphorylation on the PPXY motif of DAG1. Interacts with CMYA5. Directly interacts with ANK2 and ANK3; these interactions do not interfere with betaDAG1-binding and are necessary for proper localization in muscle cells. Identified in a dystroglycan complex that contains at least PRX, DRP2, UTRN, DMD and DAG1. Interacts with DTNB. Interacts with PGM5; the interaction is direct. Interacts with NOS1; localizes NOS1 to sarcolemma in muscle cells. As to expression, expressed in muscle fibers accumulating in the costameres of myoplasm at the sarcolemma. Expressed in brain, muscle, kidney, lung and testis. Most tissues contain transcripts of multiple isoforms. Isoform 15: Only isoform to be detected in heart and liver and is also expressed in brain, testis and hepatoma cells.

Its subcellular location is the cell membrane. The protein resides in the sarcolemma. The protein localises to the cytoplasm. It is found in the cytoskeleton. It localises to the postsynaptic cell membrane. In terms of biological role, anchors the extracellular matrix to the cytoskeleton via F-actin. Ligand for dystroglycan. Component of the dystrophin-associated glycoprotein complex which accumulates at the neuromuscular junction (NMJ) and at a variety of synapses in the peripheral and central nervous systems and has a structural function in stabilizing the sarcolemma. Also implicated in signaling events and synaptic transmission. The chain is Dystrophin from Homo sapiens (Human).